The primary structure comprises 129 residues: Small ribosomal subunit protein uS13 (129 aa).

Positions 92–114 (HKHNLPVRGQRTKTNARTRRGPR) are enriched in basic residues. A disordered region spans residues 92–129 (HKHNLPVRGQRTKTNARTRRGPRKTVAGRGQKRGATKK).

This sequence belongs to the universal ribosomal protein uS13 family. Part of the 30S ribosomal subunit. Forms a loose heterodimer with protein S19. Forms two bridges to the 50S subunit in the 70S ribosome.

In terms of biological role, located at the top of the head of the 30S subunit, it contacts several helices of the 16S rRNA. In the 70S ribosome it contacts the 23S rRNA (bridge B1a) and protein L5 of the 50S subunit (bridge B1b), connecting the 2 subunits; these bridges are implicated in subunit movement. Contacts the tRNAs in the A and P-sites. The protein is Small ribosomal subunit protein uS13 of Dehalococcoides mccartyi (strain ATCC BAA-2266 / KCTC 15142 / 195) (Dehalococcoides ethenogenes (strain 195)).